Here is a 20-residue protein sequence, read N- to C-terminus: Phospholipase A2 II-5b (20 aa).

The protein belongs to the phospholipase A2 family. Group I subfamily. The cofactor is Ca(2+). As to expression, expressed by the venom gland.

Its subcellular location is the secreted. It carries out the reaction a 1,2-diacyl-sn-glycero-3-phosphocholine + H2O = a 1-acyl-sn-glycero-3-phosphocholine + a fatty acid + H(+). Functionally, snake venom phospholipase A2 (PLA2) that exhibits weak enzymatic activity. PLA2 catalyzes the calcium-dependent hydrolysis of the 2-acyl groups in 3-sn-phosphoglycerides. In Notechis scutatus scutatus (Mainland tiger snake), this protein is Phospholipase A2 II-5b.